A 46-amino-acid chain; its full sequence is Iota-conotoxin-like M11.1 (46 aa).

4 disulfides stabilise this stretch: Cys-5/Cys-19, Cys-12/Cys-22, Cys-18/Cys-27, and Cys-21/Cys-38. At Met-44 the chain carries D-methionine. Residue Arg-46 is a propeptide, removed by a carboxypeptidase.

Belongs to the conotoxin I1 superfamily. As to expression, expressed by the venom duct.

Its subcellular location is the secreted. Its function is as follows. Iota-conotoxins bind to voltage-gated sodium channels (Nav) and act as agonists by shifting the voltage-dependence of activation to more hyperpolarized levels. Produces general excitatory symptoms. The chain is Iota-conotoxin-like M11.1 from Conus magus (Magical cone).